Here is a 603-residue protein sequence, read N- to C-terminus: UvrABC system protein C (603 aa).

Residues 15–92 (DKPGCYLMKN…IQKHQPYFNI (78 aa)) form the GIY-YIG domain. Positions 197 to 232 (ATVKRQLTKKMQRAAENMEFERAAEIRDQLHYIEVT) constitute a UVR domain.

It belongs to the UvrC family. As to quaternary structure, interacts with UvrB in an incision complex.

It is found in the cytoplasm. The UvrABC repair system catalyzes the recognition and processing of DNA lesions. UvrC both incises the 5' and 3' sides of the lesion. The N-terminal half is responsible for the 3' incision and the C-terminal half is responsible for the 5' incision. This is UvrABC system protein C from Limosilactobacillus reuteri (strain DSM 20016) (Lactobacillus reuteri).